The sequence spans 57 residues: uncharacterized protein (57 aa).

A helical membrane pass occupies residues 4–26; that stretch reads FMPIRVFLYSYVIINSLLSSFFH.

It is found in the membrane. This is an uncharacterized protein from Saccharomyces cerevisiae (strain ATCC 204508 / S288c) (Baker's yeast).